A 130-amino-acid chain; its full sequence is Small ribosomal subunit protein uS11 (130 aa).

The protein belongs to the universal ribosomal protein uS11 family. As to quaternary structure, part of the 30S ribosomal subunit. Interacts with proteins S7 and S18. Binds to IF-3.

Functionally, located on the platform of the 30S subunit, it bridges several disparate RNA helices of the 16S rRNA. Forms part of the Shine-Dalgarno cleft in the 70S ribosome. The chain is Small ribosomal subunit protein uS11 from Prochlorococcus marinus (strain MIT 9313).